Reading from the N-terminus, the 463-residue chain is MIQLSNPRINKTFEALFALEDIREVFRQSLPTGLSSAEEQALKGKLAEIRKYLDEIEADGVGNGARQKYTGKIGSLDVRTREEEYINIHPIQAAGRLTPEARKAIIAYGDGYSTCDYCRKPFRLDKITKPGIQDFHGDLARWLNMDQARVVPGARRGFQAVASALVEKGDSVIVSALAHYTEFLAVEQAGGVVKEVPKNEQNLITADATAQKIEDVRRTTGKLPVLIMIDHFDYMFANEHDVYGIAKVAKQYGIPFLYNGAYTVGIAPVDGKKIGADFVVGSGHKSMASVAPSGVLATTDEFAAKVFRTTQMVGDVTNRKFGIKEVENMGCTLMGGTLLSMIASFPAVVKRSQPQNWEDEVRKSNYFLEQFRRVQGSNVLSEWPRKHTLTKVDTTGSYNKVAETHKRRGYFFNDELTAKGIIGEFAGATKTWKLNTYGLSWEKTKYLSEAFLDIARKYDLPIN.

Pyridoxal 5'-phosphate contacts are provided by residues 154-155 (AR), N259, and 282-284 (SGH). K285 is modified (N6-(pyridoxal phosphate)lysine).

The protein belongs to the SepCysS family. In terms of assembly, homodimer. Interacts with SepRS. Pyridoxal 5'-phosphate is required as a cofactor.

It carries out the reaction O-phospho-L-seryl-tRNA(Cys) + hydrogen sulfide + H(+) = L-cysteinyl-tRNA(Cys) + phosphate. Its function is as follows. Converts O-phospho-L-seryl-tRNA(Cys) (Sep-tRNA(Cys)) to L-cysteinyl-tRNA(Cys) (Cys-tRNA(Cys)). In Methanocella arvoryzae (strain DSM 22066 / NBRC 105507 / MRE50), this protein is O-phospho-L-seryl-tRNA:Cys-tRNA synthase 2.